The primary structure comprises 288 residues: N-glycosylase/DNA lyase (288 aa).

3 residues coordinate 8-oxoguanine: Gln-35, Ser-62, and Trp-73. Residues 134-203 (NPLVLVERPS…VACASISSEM (70 aa)) form a helix-hairpin-helix region. The Schiff-base intermediate with DNA role is filled by Lys-160. Positions 164 and 189 each coordinate 8-oxoguanine. Asp-191 is a catalytic residue. Residues Asp-238 and Trp-242 each contribute to the 8-oxoguanine site.

Belongs to the archaeal N-glycosylase/DNA lyase (AGOG) family.

The enzyme catalyses 2'-deoxyribonucleotide-(2'-deoxyribose 5'-phosphate)-2'-deoxyribonucleotide-DNA = a 3'-end 2'-deoxyribonucleotide-(2,3-dehydro-2,3-deoxyribose 5'-phosphate)-DNA + a 5'-end 5'-phospho-2'-deoxyribonucleoside-DNA + H(+). In terms of biological role, DNA repair enzyme that is part of the base excision repair (BER) pathway; protects from oxidative damage by removing the major product of DNA oxidation, 8-oxoguanine (GO), from single- and double-stranded DNA substrates. This chain is N-glycosylase/DNA lyase, found in Aeropyrum pernix (strain ATCC 700893 / DSM 11879 / JCM 9820 / NBRC 100138 / K1).